The sequence spans 234 residues: MNEATSHEGPKRSLPGRPPGIRADSSGLTDRQRRVIEVIRDSVQRRGYPPSMREIGQAVGLSSTSSVAHQLMALERKGFLRRDPHRPRAYEVRGSDQSSSVQPTDTAGKPAASYVPLVGRIAAGGPILAEESVEDVFPLPRQLVGDGELFVLKVVGDSMIEAAICDGDWVTVRRQPVAENGDIVAAMLDGEATVKRFKREDGHVWLLPHNSAYQPIPGDEATILGKVVAVLRRV.

Residues 1–11 (MNEATSHEGPK) are compositionally biased toward basic and acidic residues. The segment at 1–34 (MNEATSHEGPKRSLPGRPPGIRADSSGLTDRQRR) is disordered. The segment at residues 52–72 (MREIGQAVGLSSTSSVAHQLM) is a DNA-binding region (H-T-H motif). Residues 83-94 (DPHRPRAYEVRG) are compositionally biased toward basic and acidic residues. The interval 83–109 (DPHRPRAYEVRGSDQSSSVQPTDTAGK) is disordered. Residues 95–105 (SDQSSSVQPTD) are compositionally biased toward polar residues. Residues Ser158 and Lys195 each act as for autocatalytic cleavage activity in the active site.

Belongs to the peptidase S24 family. As to quaternary structure, homodimer.

The catalysed reaction is Hydrolysis of Ala-|-Gly bond in repressor LexA.. Its function is as follows. Represses a number of genes involved in the response to DNA damage (SOS response), including recA and lexA. In the presence of single-stranded DNA, RecA interacts with LexA causing an autocatalytic cleavage which disrupts the DNA-binding part of LexA, leading to derepression of the SOS regulon and eventually DNA repair. The protein is LexA repressor of Streptomyces avermitilis (strain ATCC 31267 / DSM 46492 / JCM 5070 / NBRC 14893 / NCIMB 12804 / NRRL 8165 / MA-4680).